We begin with the raw amino-acid sequence, 311 residues long: Ribosomal RNA small subunit methyltransferase H (311 aa).

Residues Gly-34–His-36, Asp-54, Phe-78, Asp-100, and Gln-107 contribute to the S-adenosyl-L-methionine site.

The protein belongs to the methyltransferase superfamily. RsmH family.

The protein resides in the cytoplasm. It carries out the reaction cytidine(1402) in 16S rRNA + S-adenosyl-L-methionine = N(4)-methylcytidine(1402) in 16S rRNA + S-adenosyl-L-homocysteine + H(+). Functionally, specifically methylates the N4 position of cytidine in position 1402 (C1402) of 16S rRNA. This chain is Ribosomal RNA small subunit methyltransferase H, found in Hamiltonella defensa subsp. Acyrthosiphon pisum (strain 5AT).